The following is a 413-amino-acid chain: NPL4-like protein 2 (413 aa).

Ser104 is modified (phosphoserine). Positions 131–272 (SVSFDRDAAN…ADVHFEAFQM (142 aa)) constitute an MPN domain.

It belongs to the NPL4 family.

The protein operates within protein degradation; proteasomal ubiquitin-dependent pathway. Functionally, may be part of a complex that binds ubiquitinated proteins and that is necessary for the export of misfolded proteins from the ER to the cytoplasm, where they are degraded by the proteasome. This Arabidopsis thaliana (Mouse-ear cress) protein is NPL4-like protein 2.